Here is a 317-residue protein sequence, read N- to C-terminus: Melanoma-associated antigen 4 (317 aa).

A compositionally biased stretch (basic and acidic residues) spans 1–14; it reads MSSEQKSQHCKPEE. Residues 1 to 102 form a disordered region; sequence MSSEQKSQHC…EEGPSTSPDA (102 aa). A compositionally biased stretch (polar residues) spans 66–82; sequence PQGASALPTTISFTCWR. The 200-residue stretch at 110–309 folds into the MAGE domain; that stretch reads LSNKVDELAH…IAYPSLREAA (200 aa).

Expressed in many tumors of several types, such as melanoma, head and neck squamous cell carcinoma, lung carcinoma and breast carcinoma, but not in normal tissues except for testes and placenta.

Functionally, regulates cell proliferation through the inhibition of cell cycle arrest at the G1 phase. Also negatively regulates p53-mediated apoptosis. The protein is Melanoma-associated antigen 4 (MAGEA4) of Homo sapiens (Human).